The chain runs to 379 residues: Transcription factor bHLH122 (379 aa).

A compositionally biased stretch (basic and acidic residues) spans 1 to 17 (MESEFQQHHFLLHDHQH). A disordered region spans residues 1–21 (MESEFQQHHFLLHDHQHQRPR). Ser74 carries the post-translational modification Phosphoserine. Disordered regions lie at residues 79 to 98 (TFNS…EDED), 133 to 156 (SVSR…ARHN), and 190 to 286 (TSNT…MSLP). Basic and acidic residues predominate over residues 84–93 (GTEKKPPEVK). Over residues 190–200 (TSNTEASSLTP) the composition is skewed to polar residues. Phosphoserine is present on residues Ser213 and Ser234. Residues 235–261 (GGFNRSFGNEGSASSKLTALARTQSGG) show a composition bias toward polar residues. Over residues 265–274 (YKTKDEDSAS) the composition is skewed to basic and acidic residues. The bHLH domain occupies 310–360 (CATHPRSIAERVRRTKISERMRKLQDLVPNMDTQTNTADMLDLAVQYIKDL).

As to quaternary structure, homodimer.

The protein resides in the nucleus. The polypeptide is Transcription factor bHLH122 (BHLH122) (Arabidopsis thaliana (Mouse-ear cress)).